Reading from the N-terminus, the 332-residue chain is UPF0194 membrane protein YbhG (332 aa).

The first 16 residues, 1-16, serve as a signal peptide directing secretion; that stretch reads MMKKPVVIGLAVVVLA. A coiled-coil region spans residues 108-209; the sequence is EEIAQAAAAV…LNLQDSTLIA (102 aa).

Belongs to the UPF0194 family.

It is found in the periplasm. This chain is UPF0194 membrane protein YbhG, found in Escherichia coli (strain 55989 / EAEC).